Consider the following 478-residue polypeptide: Spindle defective protein 3 (478 aa).

The Cytoplasmic portion of the chain corresponds to 1-24; it reads MDQMTVEEKILEHQELEDGSSSFR. A helical membrane pass occupies residues 25–45; that stretch reads WLVSSTVIAIGGATVALYISG. Over 46–52 the chain is Extracellular; that stretch reads KIDWKIP. A helical transmembrane segment spans residues 53 to 73; sequence AIEAGLALTAGGTITCGYLWF. The Cytoplasmic portion of the chain corresponds to 74–478; sequence KKRVKTVRKL…LRRVDDDIIE (405 aa).

The protein resides in the mitochondrion. It localises to the mitochondrion outer membrane. Its function is as follows. In the first mitotic division in embryos, required for mitotic spindle alignment and asymmetric cell division. Required for motor-driven chromosome movement and homolog searching within the nucleus, and subsequently ensures homologous chromosome pairing during the prophase stage of meiosis. This is Spindle defective protein 3 from Caenorhabditis elegans.